A 492-amino-acid polypeptide reads, in one-letter code: Beta-Ala-His dipeptidase (492 aa).

Zn(2+) is bound at residue His-107. Residue Asp-109 is part of the active site. Asp-140 lines the Zn(2+) pocket. Glu-174 (proton acceptor) is an active-site residue. Position 175 (Glu-175) interacts with Zn(2+). Ser-194 is modified (phosphoserine). Residues Asp-203 and His-453 each coordinate Zn(2+).

Belongs to the peptidase M20A family. As to quaternary structure, homodimer. It depends on Zn(2+) as a cofactor. In terms of tissue distribution, detected exclusively in kidney.

It localises to the secreted. The catalysed reaction is Preferential hydrolysis of the beta-Ala-|-His dipeptide (carnosine), and also anserine, Xaa-|-His dipeptides and other dipeptides including homocarnosine.. It carries out the reaction carnosine + H2O = beta-alanine + L-histidine. It catalyses the reaction anserine + H2O = N(pros)-methyl-L-histidine + beta-alanine. The enzyme catalyses L-alanyl-L-histidine + H2O = L-histidine + L-alanine. The catalysed reaction is glycyl-L-histidine + H2O = L-histidine + glycine. It carries out the reaction L-homocarnosine + H2O = 4-aminobutanoate + L-histidine. Functionally, catalyzes the peptide bond hydrolysis in Xaa-His dipeptides, displaying the highest activity toward carnosine (beta-alanyl-L-histidine) and anserine (beta-alanyl-3-methyl-histidine). This is Beta-Ala-His dipeptidase (Cndp1) from Rattus norvegicus (Rat).